The sequence spans 549 residues: Undecaprenyl phosphate-alpha-4-amino-4-deoxy-L-arabinose arabinosyl transferase (549 aa).

A run of 12 helical transmembrane segments spans residues 9-29, 80-100, 112-132, 136-156, 176-196, 204-224, 256-276, 288-308, 312-332, 346-366, 376-396, and 402-422; these read LLLI…GLWI, LFGV…LAYL, SLAC…SGYA, PQFT…LDAG, FLTK…PYML, LLGY…PWAL, PWWF…GLLP, QPPV…FSLS, LPTY…HALV, NGLL…YLQL, FELF…LAQW, and AWAA…AAMP.

This sequence belongs to the glycosyltransferase 83 family.

The protein localises to the cell inner membrane. The catalysed reaction is 4-amino-4-deoxy-alpha-L-arabinopyranosyl di-trans,octa-cis-undecaprenyl phosphate + lipid IVA = lipid IIA + di-trans,octa-cis-undecaprenyl phosphate.. It functions in the pathway lipopolysaccharide metabolism; 4-amino-4-deoxy-beta-L-arabinose-lipid A biosynthesis. Functionally, catalyzes the transfer of the L-Ara4N moiety of the glycolipid undecaprenyl phosphate-alpha-L-Ara4N to lipid A. The modified arabinose is attached to lipid A and is required for resistance to polymyxin and cationic antimicrobial peptides. This chain is Undecaprenyl phosphate-alpha-4-amino-4-deoxy-L-arabinose arabinosyl transferase, found in Pseudomonas paraeruginosa (strain DSM 24068 / PA7) (Pseudomonas aeruginosa (strain PA7)).